Reading from the N-terminus, the 278-residue chain is MPSASTISVISAISGVAVLGALLTATIIFNDINRFYYETMETFDEFKINEKNAWDTMVMSTRSPKEMLLGRARRQAALPDCQALAKNCPPGPPGPPGAPGAAGEPGVDGDAGAAGIDGVAIQFASAAGGACIQCPAGEAGPAGAPGAPGPAGPDGQPGADGQGGAPGPAGPEGPAGDAGAPGAPGAPGNDGQPGQNGQRSTGTPGAAGAPGPQGPVGSDGQPGSAGAPGAPGPAGAPGVDGQPGANGQPGPDGEQGHDGQPGPDAAYCPCPARSSVRQ.

Disordered regions lie at residues 84 to 109 (LAKN…GVDG) and 140 to 278 (GPAG…SVRQ). Residues 89 to 98 (PPGPPGPPGA) show a composition bias toward pro residues. Triple-helical region stretches follow at residues 91–120 (GPPG…DGVA), 137–199 (GEAG…NGQR), and 202–264 (GTPG…PGPD). Low complexity predominate over residues 99–109 (PGAAGEPGVDG). Residues 158–167 (GADGQGGAPG) are compositionally biased toward gly residues. 2 stretches are compositionally biased toward low complexity: residues 172 to 228 (EGPA…AGAP) and 236 to 245 (APGVDGQPGA).

This sequence belongs to the cuticular collagen family. Collagen polypeptide chains are complexed within the cuticle by disulfide bonds and other types of covalent cross-links.

Its function is as follows. Nematode cuticles are composed largely of collagen-like proteins. The cuticle functions both as an exoskeleton and as a barrier to protect the worm from its environment. The protein is Putative cuticle collagen 91 (col-91) of Caenorhabditis elegans.